We begin with the raw amino-acid sequence, 530 residues long: C2H2-type transcription factor MSN2 (530 aa).

C2H2-type zinc fingers lie at residues 409–432 (FVCDLCNRRFRRQEHLKRHYRSLH) and 438–460 (FECNECGKKFSRSDNLAQHARTH).

The protein resides in the nucleus. It is found in the cytoplasm. Its function is as follows. Transcription factor that acts as a key downstream transcription factor in the HOG1-MAPK pathway. Plays crucial roles in the regulation of conidiation, virulence and multi-stress responses. In addition to regulating the expression of genes specifically involved in stress-response, conidiation and virulence, controls also expression of cellular signaling factors. The chain is C2H2-type transcription factor MSN2 from Metarhizium robertsii (strain ARSEF 23 / ATCC MYA-3075) (Metarhizium anisopliae (strain ARSEF 23)).